Here is a 478-residue protein sequence, read N- to C-terminus: Elongation factor Tu, chloroplastic (478 aa).

Residues M1–T29 are compositionally biased toward low complexity. The disordered stretch occupies residues M1–P31. The transit peptide at M1–R69 directs the protein to the chloroplast. A tr-type G domain is found at K79–V283. The tract at residues G88–T95 is G1. G88–T95 contacts GTP. The segment at G129 to N133 is G2. Positions D150–G153 are G3. GTP contacts are provided by residues D150–H154 and N205–D208. Positions N205–D208 are G4. The segment at S243–L245 is G5.

The protein belongs to the TRAFAC class translation factor GTPase superfamily. Classic translation factor GTPase family. EF-Tu/EF-1A subfamily.

It is found in the plastid. Its subcellular location is the chloroplast. This protein promotes the GTP-dependent binding of aminoacyl-tRNA to the A-site of ribosomes during protein biosynthesis. The protein is Elongation factor Tu, chloroplastic (TUFA) of Nicotiana tabacum (Common tobacco).